Consider the following 495-residue polypeptide: Tripartite motif-containing protein 5 (495 aa).

Position 2 is an N-acetylalanine (A2). The RING-type zinc finger occupies 15–60 (CPICLELLTEPLSLHCGHSFCQACITANHKKSMLYKEGERSCPVCR). A Phosphoserine modification is found at S87. A B box-type zinc finger spans residues 92–133 (QKVDHCARHGEKLLLFCQEDRKVICWLCERSQEHRGHHTFLM). The Zn(2+) site is built by C97, H100, C119, and H125. The stretch at 137 to 225 (AQEYHVKLQT…LTKSETEMVQ (89 aa)) forms a coiled coil. Residues 187–200 (FEQLREILDWEESN) are required for interaction with GABARAP and for autophagy. The region spanning 283–495 (LKGMLDMFRE…VPMTLCSPSS (213 aa)) is the B30.2/SPRY domain.

This sequence belongs to the TRIM/RBCC family. Can form homodimers and homotrimers. In addition to lower-order dimerization, also exhibits a higher-order multimerization and both low- and high-order multimerizations are essential for its restriction activity. Interacts with BTBD1 and BTBD2. Interacts with PSMC4, PSMC5, PSMD7 and HSPA8/HSC70. Interacts (via B30.2/SPRY domain) with HSPA1A/B. Interacts with PSMC2, MAP3K7/TAK1, TAB2 and TAB3. Interacts with SQSTM1. Interacts with TRIM6 and TRIM34. Interacts with ULK1 (phosphorylated form), GABARAP, GABARAPL1, GABARAPL2, MAP1LC3A, MAP1LC3C and BECN1. Post-translationally, degraded in a proteasome-independent fashion in the absence of viral infection but in a proteasome-dependent fashion following exposure to restriction sensitive virus. Autoubiquitinated in a RING finger- and UBE2D2-dependent manner. Monoubiquitinated by TRIM21. Deubiquitinated by Yersinia YopJ. Ubiquitination may not lead to proteasomal degradation.

It localises to the cytoplasm. Its subcellular location is the nucleus. The catalysed reaction is S-ubiquitinyl-[E2 ubiquitin-conjugating enzyme]-L-cysteine + [acceptor protein]-L-lysine = [E2 ubiquitin-conjugating enzyme]-L-cysteine + N(6)-ubiquitinyl-[acceptor protein]-L-lysine.. Its pathway is protein modification; protein ubiquitination. Its function is as follows. Capsid-specific restriction factor that prevents infection from non-host-adapted retroviruses. Blocks viral replication early in the life cycle, after viral entry but before reverse transcription. In addition to acting as a capsid-specific restriction factor, also acts as a pattern recognition receptor that activates innate immune signaling in response to the retroviral capsid lattice. Binding to the viral capsid triggers its E3 ubiquitin ligase activity, and in concert with the heterodimeric ubiquitin conjugating enzyme complex UBE2V1-UBE2N (also known as UBC13-UEV1A complex) generates 'Lys-63'-linked polyubiquitin chains, which in turn are catalysts in the autophosphorylation of the MAP3K7/TAK1 complex (includes TAK1, TAB2, and TAB3). Activation of the MAP3K7/TAK1 complex by autophosphorylation results in the induction and expression of NF-kappa-B and MAPK-responsive inflammatory genes, thereby leading to an innate immune response in the infected cell. Plays a role in regulating autophagy through activation of autophagy regulator BECN1 by causing its dissociation from its inhibitors BCL2 and TAB2. This Colobus guereza (Mantled guereza) protein is Tripartite motif-containing protein 5 (TRIM5).